Reading from the N-terminus, the 629-residue chain is Natural resistance-associated macrophage protein 2 homolog (629 aa).

The Cytoplasmic segment spans residues 1–151 (MNNNNNNKKL…KSKFSIKKLK (151 aa)). Residues 50-119 (NVVNGSIEDS…SDIDSSGDSI (70 aa)) are disordered. Residues 62 to 85 (QQQQQQQQQQQQQQQQQQQQQQQQ) are compositionally biased toward low complexity. The segment covering 96–105 (DKPFQDRDSN) has biased composition (basic and acidic residues). Residues 106–118 (IGDGSDIDSSGDS) show a composition bias toward low complexity. Residues 152-172 (SFLGPALFISVGYMDPGNWAT) form a helical membrane-spanning segment. The Extracellular portion of the chain corresponds to 173 to 182 (DLEGGSRFGY). A helical membrane pass occupies residues 183-203 (QLMWVLLFSNIMALFLQTLVI). Residues 204–224 (KLALVTKNDLAQQCRKEYSKT) are Cytoplasmic-facing. A helical membrane pass occupies residues 225–245 (VNIFLWLILELAIISTDLAEV). At 246–253 (IGTAIGLN) the chain is on the extracellular side. Residues 254–274 (ILFGLPLIAGVAITSLDTLLF) form a helical membrane-spanning segment. At 275–286 (LAIQRWGIRKLE) the chain is on the cytoplasmic side. A helical transmembrane segment spans residues 287-307 (LLILLLLSMITMCFVIELFLS). Residues 308-326 (KPIASEVFSGFVPRLNSDS) are Extracellular-facing. A helical membrane pass occupies residues 327–347 (VMVATGIVGATTMPHNLFLHG). Topologically, residues 348 to 376 (SVVKSRKIPNDRRKSVIKQAYRYNVIDTV) are cytoplasmic. Residues 377 to 397 (LALNCAFFVNIAILMLAASVF) traverse the membrane as a helical segment. Residues 398-421 (WKSNIQVTELSEAYRLLTKLMDGK) are Extracellular-facing. Residues 422 to 442 (LAAVLFGLGLFLAGQSSTITG) traverse the membrane as a helical segment. Residues 443 to 468 (TMAGQIVMEGFIKLRIKPWLRRFITR) lie on the Cytoplasmic side of the membrane. Residues 469–489 (LLAIIPAAIVIIVLGDKGTYT) traverse the membrane as a helical segment. At 490–491 (LL) the chain is on the extracellular side. The helical transmembrane segment at 492 to 512 (IISQVLLSIGLPFAVVPLIIF) threads the bilayer. Residues 513–527 (TSSYEIMGEFKNRLS) are Cytoplasmic-facing. The chain crosses the membrane as a helical span at residues 528 to 548 (IIIINSIIALFIIGLNLATIF). At 549–565 (QLINDFLHNDSIISKCL) the chain is on the extracellular side. An N-linked (GlcNAc...) asparagine glycan is attached at N557. Residues 566 to 586 (TIIFLIPLSIALCCLLLWLII) form a helical membrane-spanning segment. Topologically, residues 587-629 (SKINFFTNLLSKIFNNNNNNNNKNIINNNNNYSGNTINNQTIQ) are cytoplasmic.

The protein belongs to the NRAMP family.

The protein localises to the cell membrane. In terms of biological role, divalent transition metal (iron and manganese) transporter. The protein is Natural resistance-associated macrophage protein 2 homolog (nramp2) of Dictyostelium discoideum (Social amoeba).